A 492-amino-acid chain; its full sequence is MQDPNICQHCQLKDNPGALIWVKCDSCPQWVHVKCVPLKRIHYSNLTSSEVLSYPNSAKQIKSYRCPNHKEGEYLTAYALITQKGKRQRNKENPEDSHINKRYNFRKKKLLDYIALNEGESKRDKMNHPHKESFMKSFEKWKNGSNIINAADFAEKFDNIDVPYKIIDPLNSGVYVPNVGTDNGCLTVNYITEMIGEDYHVDVMDVQSQMNENWNLGSWNEYFTNTEPDRRDRIRNVISLEVSNIEGLELERPTAVRQNDLVDKIWSFNGHLEKVNGEKAEENDPKPKVTKYILMSVKDAYTDFHLDFAGTSVYYNVISGQKKFLLFPPTQSNIDKYIEWSLKEDQNSVFLGDILEDGIAMELDAGDLFMIPAGYIHAVYTPVDSLVFGGNFLTIRDLETHLKIVEIEKLTKVPRRFTFPKFDQVMGKLCEYLALDKNKITSDVSDGDLLSRTTNCAIQSLHAYVIKPEVKYKPLNFTSKKHLAKALADLIS.

The PHD-type; atypical zinc-finger motif lies at 4–72; the sequence is PNICQHCQLK…SYRCPNHKEG (69 aa). In terms of domain architecture, JmjC spans 254 to 409; it reads TAVRQNDLVD…THLKIVEIEK (156 aa). Residue T302 coordinates substrate. The Fe cation site is built by H305 and D307. K322 is a substrate binding site. H377 contacts Fe cation.

This sequence belongs to the JHDM1 histone demethylase family. Fe(2+) serves as cofactor.

Its subcellular location is the nucleus. The catalysed reaction is N(6),N(6)-dimethyl-L-lysyl(36)-[histone H3] + 2 2-oxoglutarate + 2 O2 = L-lysyl(36)-[histone H3] + 2 formaldehyde + 2 succinate + 2 CO2. Its function is as follows. Histone demethylase that specifically demethylates 'Lys-36' of histone H3, thereby playing a central role in histone code. Does not demethylate H3 'Lys-4' nor 'Lys-79'. The protein is JmjC domain-containing histone demethylation protein 1 (JHD1) of Saccharomyces cerevisiae (strain ATCC 204508 / S288c) (Baker's yeast).